Here is a 730-residue protein sequence, read N- to C-terminus: Catalase-peroxidase 1 (730 aa).

The segment at 1-24 (MQEKGKCPVTGMTKHKTSGGTTNQ) is disordered. A cross-link (tryptophyl-tyrosyl-methioninium (Trp-Tyr) (with M-244)) is located at residues 95-218 (WHSAGTYRMG…LAAVQMGLIY (124 aa)). Residue His96 is the Proton acceptor of the active site. Positions 218–244 (YVNPEGPNGQPSALASGKDIRDTFARM) form a cross-link, tryptophyl-tyrosyl-methioninium (Tyr-Met) (with W-95). Position 259 (His259) interacts with heme b.

It belongs to the peroxidase family. Peroxidase/catalase subfamily. As to quaternary structure, homodimer or homotetramer. Requires heme b as cofactor. Formation of the three residue Trp-Tyr-Met cross-link is important for the catalase, but not the peroxidase activity of the enzyme.

It catalyses the reaction H2O2 + AH2 = A + 2 H2O. It carries out the reaction 2 H2O2 = O2 + 2 H2O. In terms of biological role, bifunctional enzyme with both catalase and broad-spectrum peroxidase activity. This chain is Catalase-peroxidase 1, found in Alkaliphilus metalliredigens (strain QYMF).